The chain runs to 223 residues: Glycolipid transfer protein 2 (223 aa).

Residues Asp-69, Asn-73, Trp-116, and His-155 each contribute to the a ganglioside GM3 (d18:1(4E)) site.

It belongs to the GLTP family.

Its function is as follows. Transfers glycolipids in vitro. The polypeptide is Glycolipid transfer protein 2 (Arabidopsis thaliana (Mouse-ear cress)).